Here is a 499-residue protein sequence, read N- to C-terminus: Glycerol kinase 2 (499 aa).

Thr13 lines the ADP pocket. The ATP site is built by Thr13, Thr14, and Ser15. Thr13 contributes to the sn-glycerol 3-phosphate binding site. Arg17 contributes to the ADP binding site. Sn-glycerol 3-phosphate-binding residues include Arg83, Glu84, Tyr134, and Asp241. Residues Arg83, Glu84, Tyr134, Asp241, and Gln242 each coordinate glycerol. Residues Thr263 and Gly306 each coordinate ADP. Residues Thr263, Gly306, Gln310, and Gly407 each coordinate ATP. Gly407 lines the ADP pocket.

Belongs to the FGGY kinase family.

It carries out the reaction glycerol + ATP = sn-glycerol 3-phosphate + ADP + H(+). It participates in polyol metabolism; glycerol degradation via glycerol kinase pathway; sn-glycerol 3-phosphate from glycerol: step 1/1. Key enzyme in the regulation of glycerol uptake and metabolism. Catalyzes the phosphorylation of glycerol to yield sn-glycerol 3-phosphate. This Saccharolobus solfataricus (strain ATCC 35092 / DSM 1617 / JCM 11322 / P2) (Sulfolobus solfataricus) protein is Glycerol kinase 2.